The sequence spans 529 residues: Inosine-5'-monophosphate dehydrogenase (529 aa).

CBS domains are found at residues 129–185 (MVTD…SKQV) and 189–246 (MTKT…PLAT). NAD(+)-binding positions include aspartate 283 and 334–336 (GVG). Positions 336 and 338 each coordinate K(+). Serine 339 provides a ligand contact to IMP. Cysteine 341 is a K(+) binding site. Cysteine 341 functions as the Thioimidate intermediate in the catalytic mechanism. Residues 374 to 376 (DGG), 397 to 398 (GS), and 421 to 425 (YRGMG) contribute to the IMP site. The active-site Proton acceptor is the arginine 443. IMP is bound at residue glutamate 458. K(+) is bound by residues glutamate 511, serine 512, and histidine 513.

The protein belongs to the IMPDH/GMPR family. As to quaternary structure, homotetramer. K(+) is required as a cofactor.

The catalysed reaction is IMP + NAD(+) + H2O = XMP + NADH + H(+). It participates in purine metabolism; XMP biosynthesis via de novo pathway; XMP from IMP: step 1/1. With respect to regulation, mycophenolic acid (MPA) is a non-competitive inhibitor that prevents formation of the closed enzyme conformation by binding to the same site as the amobile flap. In contrast, mizoribine monophosphate (MZP) is a competitive inhibitor that induces the closed conformation. MPA is a potent inhibitor of mammalian IMPDHs but a poor inhibitor of the bacterial enzymes. MZP is a more potent inhibitor of bacterial IMPDH. Its function is as follows. Catalyzes the conversion of inosine 5'-phosphate (IMP) to xanthosine 5'-phosphate (XMP), the first committed and rate-limiting step in the de novo synthesis of guanine nucleotides, and therefore plays an important role in the regulation of cell growth. In Mycobacterium leprae (strain TN), this protein is Inosine-5'-monophosphate dehydrogenase.